Reading from the N-terminus, the 513-residue chain is Bifunctional pantoate ligase/cytidylate kinase (513 aa).

Residues 1–282 form a pantoate--beta-alanine ligase region; it reads MGTFHRLTTT…VGQTRLIDNC (282 aa). 32-39 lines the ATP pocket; it reads MGALHGGH. The Proton donor role is filled by His39. Residue Gln63 participates in (R)-pantoate binding. Gln63 is a binding site for beta-alanine. Residue 152–155 participates in ATP binding; that stretch reads GQKD. Gln158 contributes to the (R)-pantoate binding site. ATP contacts are provided by residues Val181 and 189-192; that span reads LSSR. The interval 283–513 is cytidylate kinase; it reads LLDRRRPILA…HLYRSRFPQP (231 aa).

It in the N-terminal section; belongs to the pantothenate synthetase family. In the C-terminal section; belongs to the cytidylate kinase family. Type 1 subfamily.

Its subcellular location is the cytoplasm. The catalysed reaction is (R)-pantoate + beta-alanine + ATP = (R)-pantothenate + AMP + diphosphate + H(+). It carries out the reaction CMP + ATP = CDP + ADP. The enzyme catalyses dCMP + ATP = dCDP + ADP. It participates in cofactor biosynthesis; (R)-pantothenate biosynthesis; (R)-pantothenate from (R)-pantoate and beta-alanine: step 1/1. In terms of biological role, catalyzes the condensation of pantoate with beta-alanine in an ATP-dependent reaction via a pantoyl-adenylate intermediate. Its function is as follows. Catalyzes the transfer of a phosphate group from ATP to either CMP or dCMP to form CDP or dCDP and ADP, respectively. The protein is Bifunctional pantoate ligase/cytidylate kinase of Thermosynechococcus vestitus (strain NIES-2133 / IAM M-273 / BP-1).